Here is a 459-residue protein sequence, read N- to C-terminus: Exodeoxyribonuclease 7 large subunit (459 aa).

The protein belongs to the XseA family. In terms of assembly, heterooligomer composed of large and small subunits.

It localises to the cytoplasm. It carries out the reaction Exonucleolytic cleavage in either 5'- to 3'- or 3'- to 5'-direction to yield nucleoside 5'-phosphates.. Bidirectionally degrades single-stranded DNA into large acid-insoluble oligonucleotides, which are then degraded further into small acid-soluble oligonucleotides. This Pseudomonas aeruginosa (strain UCBPP-PA14) protein is Exodeoxyribonuclease 7 large subunit.